Here is a 217-residue protein sequence, read N- to C-terminus: MTHIQPKIKICGITRLEDALAATFAGADALGFNFSHTSARYIAPNNAAAIIKQLPPFVQTVGIFVEQSPSEINAIAQTCNLHYAQLHNDLYGVKEALAITTLPVIKVFRPNENFDVQEVKAFIGESHVTTYLFDAYRPDAHGGTGERIEATLAERIFQAMGNECYAILAGGLTPNNVAEAIRRIRPYGVDTASGVEKAPGIKDVAKMRAFVTAAQNA.

It belongs to the TrpF family.

It carries out the reaction N-(5-phospho-beta-D-ribosyl)anthranilate = 1-(2-carboxyphenylamino)-1-deoxy-D-ribulose 5-phosphate. It functions in the pathway amino-acid biosynthesis; L-tryptophan biosynthesis; L-tryptophan from chorismate: step 3/5. The protein is N-(5'-phosphoribosyl)anthranilate isomerase of Chlorobium chlorochromatii (strain CaD3).